The sequence spans 583 residues: Isocitrate dehydrogenase kinase/phosphatase (583 aa).

ATP contacts are provided by residues 315 to 321 (APGIRGM) and K336. D371 is a catalytic residue.

The protein belongs to the AceK family.

Its subcellular location is the cytoplasm. It carries out the reaction L-seryl-[isocitrate dehydrogenase] + ATP = O-phospho-L-seryl-[isocitrate dehydrogenase] + ADP + H(+). In terms of biological role, bifunctional enzyme which can phosphorylate or dephosphorylate isocitrate dehydrogenase (IDH) on a specific serine residue. This is a regulatory mechanism which enables bacteria to bypass the Krebs cycle via the glyoxylate shunt in response to the source of carbon. When bacteria are grown on glucose, IDH is fully active and unphosphorylated, but when grown on acetate or ethanol, the activity of IDH declines drastically concomitant with its phosphorylation. This Salmonella agona (strain SL483) protein is Isocitrate dehydrogenase kinase/phosphatase.